We begin with the raw amino-acid sequence, 620 residues long: Glutathione-regulated potassium-efflux system protein KefC (620 aa).

Helical transmembrane passes span 4 to 24, 26 to 46, 54 to 74, 90 to 110, 114 to 134, 149 to 169, 178 to 198, 218 to 238, 270 to 290, 294 to 314, 327 to 347, and 359 to 379; these read HTLL…PIAV, LGLG…PWGL, SILH…GLEL, GALQ…FLGL, VAEL…MQAM, FAVL…IPLL, LGAF…VVLL, VFSA…EEVG, GLLL…GTLV, LRIL…LWLV, WFAV…GAAQ, and ALTL…VLLT. In terms of domain architecture, RCK N-terminal spans 399–518; sequence QPRVIVAGFG…AGVAMPERET (120 aa). Residues 599-620 are disordered; that stretch reads QGTAEGKHSGEAADEPEVKPSI.

It belongs to the monovalent cation:proton antiporter 2 (CPA2) transporter (TC 2.A.37) family. KefC subfamily. In terms of assembly, homodimer. Interacts with the regulatory subunit KefF.

Its subcellular location is the cell inner membrane. Its function is as follows. Pore-forming subunit of a potassium efflux system that confers protection against electrophiles. Catalyzes K(+)/H(+) antiport. This is Glutathione-regulated potassium-efflux system protein KefC from Salmonella dublin (strain CT_02021853).